A 376-amino-acid chain; its full sequence is Acetate kinase (376 aa).

Asparagine 7 serves as a coordination point for Mg(2+). Residue lysine 14 coordinates ATP. Residue arginine 71 coordinates substrate. Aspartate 128 serves as the catalytic Proton donor/acceptor. ATP is bound by residues 188–192, 262–264, and 310–314; these read HLGNG, DFR, and GVGEN. Glutamate 364 contacts Mg(2+).

Belongs to the acetokinase family. As to quaternary structure, homodimer. It depends on Mg(2+) as a cofactor. Mn(2+) serves as cofactor.

It localises to the cytoplasm. It carries out the reaction acetate + ATP = acetyl phosphate + ADP. It participates in metabolic intermediate biosynthesis; acetyl-CoA biosynthesis; acetyl-CoA from acetate: step 1/2. In terms of biological role, catalyzes the formation of acetyl phosphate from acetate and ATP. Can also catalyze the reverse reaction. The chain is Acetate kinase from Mycolicibacterium smegmatis (strain ATCC 700084 / mc(2)155) (Mycobacterium smegmatis).